Here is a 365-residue protein sequence, read N- to C-terminus: DNA replication and repair protein RecF (365 aa).

30 to 37 provides a ligand contact to ATP; that stretch reads GLNAQGKT.

It belongs to the RecF family.

It is found in the cytoplasm. Functionally, the RecF protein is involved in DNA metabolism; it is required for DNA replication and normal SOS inducibility. RecF binds preferentially to single-stranded, linear DNA. It also seems to bind ATP. This is DNA replication and repair protein RecF from Chlamydia trachomatis serovar L2b (strain UCH-1/proctitis).